A 244-amino-acid polypeptide reads, in one-letter code: Cobalt transport protein CbiM (244 aa).

The N-terminal stretch at 1 to 27 (MVEGMLKTNFRLLFLLIFLLIPTPVLA) is a signal peptide. The next 6 helical transmembrane spans lie at 36–56 (PVKW…VGFI), 65–85 (GPGA…LSAL), 102–122 (LAAI…VLIF), 134–154 (TLGA…YGVY), 168–188 (IFLA…VQLA), and 196–216 (LFLS…PLAI).

Belongs to the CbiM family. In terms of assembly, forms an energy-coupling factor (ECF) transporter complex composed of an ATP-binding protein (A component, CbiO), a transmembrane protein (T component, CbiQ) and 2 possible substrate-capture proteins (S components, CbiM and CbiN) of unknown stoichimetry.

The protein localises to the cell membrane. It functions in the pathway cofactor biosynthesis; adenosylcobalamin biosynthesis. Functionally, part of the energy-coupling factor (ECF) transporter complex CbiMNOQ involved in cobalt import. The polypeptide is Cobalt transport protein CbiM (Carboxydothermus hydrogenoformans (strain ATCC BAA-161 / DSM 6008 / Z-2901)).